We begin with the raw amino-acid sequence, 121 residues long: Large ribosomal subunit protein bL19 (121 aa).

The protein belongs to the bacterial ribosomal protein bL19 family.

Functionally, this protein is located at the 30S-50S ribosomal subunit interface and may play a role in the structure and function of the aminoacyl-tRNA binding site. The protein is Large ribosomal subunit protein bL19 of Chlamydia caviae (strain ATCC VR-813 / DSM 19441 / 03DC25 / GPIC) (Chlamydophila caviae).